We begin with the raw amino-acid sequence, 440 residues long: Asparagine--tRNA ligase (440 aa).

It belongs to the class-II aminoacyl-tRNA synthetase family. As to quaternary structure, homodimer.

The protein localises to the cytoplasm. The enzyme catalyses tRNA(Asn) + L-asparagine + ATP = L-asparaginyl-tRNA(Asn) + AMP + diphosphate + H(+). The polypeptide is Asparagine--tRNA ligase (Roseiflexus castenholzii (strain DSM 13941 / HLO8)).